Reading from the N-terminus, the 118-residue chain is Non-specific lipid-transfer protein D (118 aa).

Residues 1–25 (MAGLMKLACLIFACMIVAGPITSNA) form the signal peptide. 4 disulfide bridges follow: cysteine 29-cysteine 77, cysteine 39-cysteine 54, cysteine 55-cysteine 100, and cysteine 75-cysteine 114.

This sequence belongs to the plant LTP family.

Plant non-specific lipid-transfer proteins transfer phospholipids as well as galactolipids across membranes. May play a role in wax or cutin deposition in the cell walls of expanding epidermal cells and certain secretory tissues. In Brassica oleracea var. italica (Broccoli), this protein is Non-specific lipid-transfer protein D (WAX9D).